The sequence spans 690 residues: Elongation factor G (690 aa).

The tr-type G domain maps to 8–283; the sequence is EDYRNFGIMA…AVVDYLPSPV (276 aa). GTP-binding positions include 17 to 24, 81 to 85, and 135 to 138; these read AHIDAGKT, DTPGH, and NKMD.

This sequence belongs to the TRAFAC class translation factor GTPase superfamily. Classic translation factor GTPase family. EF-G/EF-2 subfamily.

The protein resides in the cytoplasm. Its function is as follows. Catalyzes the GTP-dependent ribosomal translocation step during translation elongation. During this step, the ribosome changes from the pre-translocational (PRE) to the post-translocational (POST) state as the newly formed A-site-bound peptidyl-tRNA and P-site-bound deacylated tRNA move to the P and E sites, respectively. Catalyzes the coordinated movement of the two tRNA molecules, the mRNA and conformational changes in the ribosome. The protein is Elongation factor G of Rhodopseudomonas palustris (strain BisB18).